Here is a 375-residue protein sequence, read N- to C-terminus: DNA replication and repair protein RecF (375 aa).

ATP is bound at residue 30–37 (GENAQGKT).

This sequence belongs to the RecF family.

It localises to the cytoplasm. Functionally, the RecF protein is involved in DNA metabolism; it is required for DNA replication and normal SOS inducibility. RecF binds preferentially to single-stranded, linear DNA. It also seems to bind ATP. This is DNA replication and repair protein RecF from Bacillus thuringiensis (strain Al Hakam).